The following is a 675-amino-acid chain: Protein C-mannosyl-transferase DPY19L1 (675 aa).

Positions 1 to 22 (MEGRPPPEGRPPPRPRTGRAPR) are disordered. 11 helical membrane passes run 66 to 88 (LYYSYFKTIVEAPSFLNGVWMIM), 156 to 176 (ACFYVAVIFILNGLMMALFFI), 186 to 208 (LGGLVTVLCFFFNHGECTRVMWT), 236 to 254 (LYRGSLIALCISNVFFMLP), 260 to 279 (FVLLTQIASLFAVYVVGYID), 286 to 303 (IIYIHMISLALCFVLMFG), 309 to 325 (TSYYASSLVIIWGILAM), 334 to 354 (VSELSLWVIQGCFWLFGTVIL), 414 to 434 (VVLVVFVAIVRKIISDMWGVL), 449 to 469 (GELVYHALQLLAYTALGILIM), and 491 to 511 (LFGWLFCKVHPGAIVFAILAA).

This sequence belongs to the dpy-19 family. As to expression, widely expressed.

It localises to the endoplasmic reticulum membrane. It catalyses the reaction L-tryptophyl-[protein] + a di-trans,poly-cis-dolichyl beta-D-mannosyl phosphate = C-alpha-D-mannosyl-L-tryptophyl-[protein] + a di-trans,poly-cis-dolichyl phosphate + H(+). The protein operates within protein modification; protein glycosylation. Its function is as follows. C-mannosyltransferase that mediates the C-mannosylation tryptophan residues on target proteins. The reaction occurs on the luminal side of the endoplasmic reticulum and involves the transfer of a mannose unit from a dolichylphosphate mannose (Dol-P-Man) donor to an acceptor protein containing a WxxW consensus sequence. C-mannosylates the first two tryptophans in the WxxWxxWxxC motif in thrombospondin (TSP) type-1 of UNC5A. Regulates neurite extension during development. This Homo sapiens (Human) protein is Protein C-mannosyl-transferase DPY19L1 (DPY19L1).